Consider the following 463-residue polypeptide: Steroidogenic factor 1 (463 aa).

The nuclear receptor DNA-binding region spans 10–85 (DELCPVCGDK…VGMRLEAVRA (76 aa)). The segment at 13–33 (CPVCGDKVSGYHYGLLTCESC) adopts an NR C4-type zinc-finger fold. 3 positions are modified to N6-acetyllysine: lysine 34, lysine 38, and lysine 72. The NR C4-type zinc-finger motif lies at 49 to 73 (CTESQNCKIDKTQRKRCPYCRFQKC). Residue lysine 119 forms a Glycyl lysine isopeptide (Lys-Gly) (interchain with G-Cter in SUMO) linkage. A disordered region spans residues 119–160 (KLETGPSMGPPPQTDYPLAPALHPGAKGLAPAPPAGPPGDYE). Positions 135 to 148 (PLAPALHPGAKGLA) are enriched in low complexity. Lysine 193 participates in a covalent cross-link: Glycyl lysine isopeptide (Lys-Gly) (interchain with G-Cter in SUMO). The segment at 197 to 216 (PEPYASPHEPAPPYGYPEPY) is disordered. Serine 202 carries the post-translational modification Phosphoserine; by CDK7. Positions 205-216 (EPAPPYGYPEPY) are enriched in pro residues. Positions 224 to 461 (GVPELILKLL…NLLIEMLHAK (238 aa)) constitute an NR LBD domain. The a 1,2-diacyl-sn-glycero-3-phosphocholine site is built by glycine 343, tyrosine 438, and lysine 442.

Belongs to the nuclear hormone receptor family. NR5 subfamily. In terms of assembly, binds DNA as a monomer. Part of a complex consisting of SFPQ, NONO and NR5A1. Interacts with NR0B2, NCOA2 and PPARGC1A. Interacts with DGKQ and CDK7. Binds to and activated by HIPK3. Post-translationally, acetylation stimulates the transcriptional activity. In terms of processing, sumoylation reduces CDK7-mediated phosphorylation on Ser-202. Phosphorylated on Ser-202 by CDK7. This phosphorylation promotes transcriptional activity. As to expression, expressed in the pre-granulosa and Sertoli cells of the ovary and testis, respectively. In the testis it is also present in the interstitial cells. In the adult ovary it is expressed in the interstitial gland, and in the granulosa cells and theca interna of small to medium-sized antral follicles, but is not expressed in large antral follicles.

It localises to the nucleus. In terms of biological role, transcriptional activator. Seems to be essential for sexual differentiation and formation of the primary steroidogenic tissues. Binds to the Ad4 site found in the promoter region of steroidogenic P450 genes such as CYP11A, CYP11B and CYP21B. Also regulates the AMH/Muellerian inhibiting substance gene as well as the AHCH and STAR genes. 5'-YCAAGGYC-3' and 5'-RRAGGTCA-3' are the consensus sequences for the recognition by NR5A1. The SFPQ-NONO-NR5A1 complex binds to the CYP17 promoter and regulates basal and cAMP-dependent transcriptional activity. Binds phosphatidylcholine and phospholipids with a phosphatidylinositol (PI) headgroup, in particular PI(3,4)P2 and PI(3,4,5)P3. Activated by the phosphorylation of NR5A1 by HIPK3 leading to increased steroidogenic gene expression upon cAMP signaling pathway stimulation. The sequence is that of Steroidogenic factor 1 (NR5A1) from Notamacropus eugenii (Tammar wallaby).